Consider the following 186-residue polypeptide: ATP synthase subunit b (186 aa).

Residues 28 to 48 (IVWSIIPFAVILFVFWKFVLP) form a helical membrane-spanning segment.

This sequence belongs to the ATPase B chain family. In terms of assembly, F-type ATPases have 2 components, F(1) - the catalytic core - and F(0) - the membrane proton channel. F(1) has five subunits: alpha(3), beta(3), gamma(1), delta(1), epsilon(1). F(0) has three main subunits: a(1), b(2) and c(10-14). The alpha and beta chains form an alternating ring which encloses part of the gamma chain. F(1) is attached to F(0) by a central stalk formed by the gamma and epsilon chains, while a peripheral stalk is formed by the delta and b chains.

Its subcellular location is the cell membrane. Functionally, f(1)F(0) ATP synthase produces ATP from ADP in the presence of a proton or sodium gradient. F-type ATPases consist of two structural domains, F(1) containing the extramembraneous catalytic core and F(0) containing the membrane proton channel, linked together by a central stalk and a peripheral stalk. During catalysis, ATP synthesis in the catalytic domain of F(1) is coupled via a rotary mechanism of the central stalk subunits to proton translocation. In terms of biological role, component of the F(0) channel, it forms part of the peripheral stalk, linking F(1) to F(0). The sequence is that of ATP synthase subunit b from Corynebacterium jeikeium (strain K411).